We begin with the raw amino-acid sequence, 111 residues long: Large ribosomal subunit protein uL22 (111 aa).

Belongs to the universal ribosomal protein uL22 family. As to quaternary structure, part of the 50S ribosomal subunit.

This protein binds specifically to 23S rRNA; its binding is stimulated by other ribosomal proteins, e.g. L4, L17, and L20. It is important during the early stages of 50S assembly. It makes multiple contacts with different domains of the 23S rRNA in the assembled 50S subunit and ribosome. Functionally, the globular domain of the protein is located near the polypeptide exit tunnel on the outside of the subunit, while an extended beta-hairpin is found that lines the wall of the exit tunnel in the center of the 70S ribosome. In Stenotrophomonas maltophilia (strain R551-3), this protein is Large ribosomal subunit protein uL22.